Consider the following 966-residue polypeptide: Integrator complex subunit 7 (966 aa).

Phosphoserine occurs at positions 338 and 809. Positions 941 to 966 are disordered; sequence LQQQAQQPLQPQPLPQPQPRSAYTRF.

The protein belongs to the Integrator subunit 7 family. In terms of assembly, component of the Integrator complex, composed of core subunits INTS1, INTS2, INTS3, INTS4, INTS5, INTS6, INTS7, INTS8, INTS9/RC74, INTS10, INTS11/CPSF3L, INTS12, INTS13, INTS14 and INTS15. The core complex associates with protein phosphatase 2A subunits PPP2CA and PPP2R1A, to form the Integrator-PP2A (INTAC) complex. Interacts with NABP2.

The protein localises to the nucleus. The protein resides in the chromosome. It localises to the cytoplasm. Its function is as follows. Component of the integrator complex, a multiprotein complex that terminates RNA polymerase II (Pol II) transcription in the promoter-proximal region of genes. The integrator complex provides a quality checkpoint during transcription elongation by driving premature transcription termination of transcripts that are unfavorably configured for transcriptional elongation: the complex terminates transcription by (1) catalyzing dephosphorylation of the C-terminal domain (CTD) of Pol II subunit POLR2A/RPB1 and SUPT5H/SPT5, (2) degrading the exiting nascent RNA transcript via endonuclease activity and (3) promoting the release of Pol II from bound DNA. The integrator complex is also involved in terminating the synthesis of non-coding Pol II transcripts, such as enhancer RNAs (eRNAs), small nuclear RNAs (snRNAs), telomerase RNAs and long non-coding RNAs (lncRNAs). May be not involved in the recruitment of cytoplasmic dynein to the nuclear envelope by different components of the INT complex. Plays a role in DNA damage response (DDR) signaling during the S phase. In Mus musculus (Mouse), this protein is Integrator complex subunit 7 (Ints7).